We begin with the raw amino-acid sequence, 137 residues long: Large ribosomal subunit protein bL21 (137 aa).

The tract at residues 1 to 26 (MADTKTATPATDAEEATATPPAAAPS) is disordered.

Belongs to the bacterial ribosomal protein bL21 family. In terms of assembly, part of the 50S ribosomal subunit. Contacts protein L20.

This protein binds to 23S rRNA in the presence of protein L20. This chain is Large ribosomal subunit protein bL21, found in Parasynechococcus marenigrum (strain WH8102).